The sequence spans 414 residues: Cyclohex-1-ene-1-carbonyl-CoA dehydrogenase (414 aa).

Asp124 serves as the catalytic Proton acceptor. FAD is bound by residues Ala157, Thr158, Ser164, and Thr190. Cyclohex-1-ene-1-carbonyl-CoA is bound at residue Ser164. Ser164 serves as a coordination point for cyclohexa-1,5-diene-1-carbonyl-CoA. Cyclohex-1-ene-1-carbonyl-CoA contacts are provided by Lys211, Arg275, and Thr396. Lys211, Arg275, and Thr396 together coordinate cyclohexa-1,5-diene-1-carbonyl-CoA. Residues Thr398 and Gln400 each contribute to the FAD site. Residue Arg408 coordinates cyclohex-1-ene-1-carbonyl-CoA. Position 408 (Arg408) interacts with cyclohexa-1,5-diene-1-carbonyl-CoA.

This sequence belongs to the acyl-CoA dehydrogenase family. As to quaternary structure, homotetramer. Requires FAD as cofactor.

It catalyses the reaction cyclohex-1-ene-1-carbonyl-CoA + oxidized [electron-transfer flavoprotein] + H(+) = cyclohexa-1,5-diene-1-carbonyl-CoA + reduced [electron-transfer flavoprotein]. In terms of biological role, mediates the conversion of cyclohex-1-ene-1-carbonyl-CoA (Ch1CoA) into (E)-2-cyclohex-1,5-diene-1-carbonyl-CoA in biosynthesis of cyclohexane-1-carboxylate, a by-product produced during fermentation of benzoate and crotonate to acetate. Also able to further convert (E)-2-cyclohex-1,5-diene-1-carbonyl-CoA to benzoyl-CoA. This chain is Cyclohex-1-ene-1-carbonyl-CoA dehydrogenase, found in Syntrophus aciditrophicus (strain SB).